A 129-amino-acid polypeptide reads, in one-letter code: Small ribosomal subunit protein uS9 (129 aa).

Positions 98–129 are disordered; the sequence is KAQGFLTRDPRKKERKKYGRKKARKSFQFSKR. A compositionally biased stretch (basic residues) spans 110-129; it reads KERKKYGRKKARKSFQFSKR.

This sequence belongs to the universal ribosomal protein uS9 family.

This is Small ribosomal subunit protein uS9 from Chlamydia trachomatis serovar L2 (strain ATCC VR-902B / DSM 19102 / 434/Bu).